A 565-amino-acid chain; its full sequence is Proline--tRNA ligase (565 aa).

It belongs to the class-II aminoacyl-tRNA synthetase family. ProS type 1 subfamily. Homodimer.

The protein resides in the cytoplasm. The catalysed reaction is tRNA(Pro) + L-proline + ATP = L-prolyl-tRNA(Pro) + AMP + diphosphate. In terms of biological role, catalyzes the attachment of proline to tRNA(Pro) in a two-step reaction: proline is first activated by ATP to form Pro-AMP and then transferred to the acceptor end of tRNA(Pro). As ProRS can inadvertently accommodate and process non-cognate amino acids such as alanine and cysteine, to avoid such errors it has two additional distinct editing activities against alanine. One activity is designated as 'pretransfer' editing and involves the tRNA(Pro)-independent hydrolysis of activated Ala-AMP. The other activity is designated 'posttransfer' editing and involves deacylation of mischarged Ala-tRNA(Pro). The misacylated Cys-tRNA(Pro) is not edited by ProRS. This Lactobacillus delbrueckii subsp. bulgaricus (strain ATCC BAA-365 / Lb-18) protein is Proline--tRNA ligase.